A 244-amino-acid chain; its full sequence is uncharacterized protein (244 aa).

In terms of domain architecture, WGR spans 1–78; sequence MKKRFIYHDE…PKFNFMDRYY (78 aa).

This is an uncharacterized protein from Escherichia coli (strain K12).